The primary structure comprises 177 residues: Large ribosomal subunit protein uL10 (177 aa).

This sequence belongs to the universal ribosomal protein uL10 family. Part of the ribosomal stalk of the 50S ribosomal subunit. The N-terminus interacts with L11 and the large rRNA to form the base of the stalk. The C-terminus forms an elongated spine to which L12 dimers bind in a sequential fashion forming a multimeric L10(L12)X complex.

Its function is as follows. Forms part of the ribosomal stalk, playing a central role in the interaction of the ribosome with GTP-bound translation factors. The polypeptide is Large ribosomal subunit protein uL10 (Mycobacterium leprae (strain Br4923)).